The chain runs to 395 residues: Formate-dependent phosphoribosylglycinamide formyltransferase (395 aa).

N(1)-(5-phospho-beta-D-ribosyl)glycinamide-binding positions include 22–23 and glutamate 82; that span reads EL. Residues arginine 115, lysine 156, 161–166, 196–199, and glutamate 204 each bind ATP; these read SSGKGQ and EGFI. The 190-residue stretch at 120-309 folds into the ATP-grasp domain; that stretch reads RLAAETLGLP…EFALHARAIL (190 aa). Mg(2+)-binding residues include glutamate 268 and glutamate 280. N(1)-(5-phospho-beta-D-ribosyl)glycinamide contacts are provided by residues aspartate 287, lysine 356, and 363–364; that span reads RR.

This sequence belongs to the PurK/PurT family. In terms of assembly, homodimer.

It catalyses the reaction N(1)-(5-phospho-beta-D-ribosyl)glycinamide + formate + ATP = N(2)-formyl-N(1)-(5-phospho-beta-D-ribosyl)glycinamide + ADP + phosphate + H(+). Its pathway is purine metabolism; IMP biosynthesis via de novo pathway; N(2)-formyl-N(1)-(5-phospho-D-ribosyl)glycinamide from N(1)-(5-phospho-D-ribosyl)glycinamide (formate route): step 1/1. Its function is as follows. Involved in the de novo purine biosynthesis. Catalyzes the transfer of formate to 5-phospho-ribosyl-glycinamide (GAR), producing 5-phospho-ribosyl-N-formylglycinamide (FGAR). Formate is provided by PurU via hydrolysis of 10-formyl-tetrahydrofolate. This chain is Formate-dependent phosphoribosylglycinamide formyltransferase, found in Stenotrophomonas maltophilia (strain R551-3).